We begin with the raw amino-acid sequence, 732 residues long: Non-structural protein 4 (732 aa).

2 stretches are compositionally biased toward polar residues: residues 13–23 (KNKGIQQNQWH) and 31–56 (LSGQ…NSKS). Disordered stretches follow at residues 13–74 (KNKG…NSAA) and 706–732 (LGRN…KQKE). Acidic residues predominate over residues 719–732 (QVEEAENEEEKQKE).

This chain is Non-structural protein 4, found in Catharanthus roseus (Madagascar periwinkle).